The following is a 20-amino-acid chain: Venom prothrombin activator notanarin-D (20 aa).

Positions serine 1–proline 10 constitute a Gla domain. 4-carboxyglutamate is present on residues glutamate 6 and glutamate 7. A Peptidase S1 domain is found at isoleucine 11–glycine 20.

Belongs to the peptidase S1 family. Snake venom subfamily. Heterodimer of a light chain and a heavy chain; disulfide-linked. Gamma-carboxyglutamate residues are formed by vitamin K dependent carboxylation. These residues are essential for the binding of calcium. As to expression, expressed by the venom gland.

It is found in the secreted. The catalysed reaction is Selective cleavage of Arg-|-Thr and then Arg-|-Ile bonds in prothrombin to form thrombin.. Functionally, snake prothrombin activator that attacks the hemostatic system of prey. This protein is functionally similar to blood coagulation factor Xa. The polypeptide is Venom prothrombin activator notanarin-D (Notechis scutatus niger (Peninsula tiger snake)).